Consider the following 197-residue polypeptide: SIGLEC family-like protein 1 (197 aa).

The helical transmembrane segment at 118–138 threads the bilayer; sequence GAIYAGIVIALLFLCLLPLIV. The disordered stretch occupies residues 160 to 179; the sequence is VRASQELEMSLKPEEPGKPV. Over residues 162-176 the composition is skewed to basic and acidic residues; the sequence is ASQELEMSLKPEEPG.

It localises to the membrane. The polypeptide is SIGLEC family-like protein 1 (SIGLECL1) (Homo sapiens (Human)).